Consider the following 279-residue polypeptide: Phosphatidylglycerol--prolipoprotein diacylglyceryl transferase (279 aa).

A run of 3 helical transmembrane segments spans residues 22-42 (WYGIIIACGILLGYFIAQAAL), 52-72 (LIDIIFYSAIVGFIVARIYFV), and 89-109 (IWHGGIAIHGGLIGGLISGII). Arginine 137 is a binding site for a 1,2-diacyl-sn-glycero-3-phospho-(1'-sn-glycerol). 2 consecutive transmembrane segments (helical) span residues 203-223 (LGETFFGYLIWYSVGRFFVEA) and 235-255 (IRVAQLVSVVLILISVIFVIY).

The protein belongs to the Lgt family.

Its subcellular location is the cell membrane. The enzyme catalyses L-cysteinyl-[prolipoprotein] + a 1,2-diacyl-sn-glycero-3-phospho-(1'-sn-glycerol) = an S-1,2-diacyl-sn-glyceryl-L-cysteinyl-[prolipoprotein] + sn-glycerol 1-phosphate + H(+). It participates in protein modification; lipoprotein biosynthesis (diacylglyceryl transfer). Its function is as follows. Catalyzes the transfer of the diacylglyceryl group from phosphatidylglycerol to the sulfhydryl group of the N-terminal cysteine of a prolipoprotein, the first step in the formation of mature lipoproteins. The sequence is that of Phosphatidylglycerol--prolipoprotein diacylglyceryl transferase from Staphylococcus epidermidis (strain ATCC 12228 / FDA PCI 1200).